We begin with the raw amino-acid sequence, 427 residues long: MKLLKRLVSVFAIVLAVGSNAFAGDEVRIVIDEGVDGARPIAVVPFVGSAPEDISKIVADDLRNSGKFNPIAVSQMPQRPTSAAEVNPEAWSNIGIDAIVIGQVVPSGNGYSITYQLIDTVGASGTPGTVLMQNSYTVTNKWLRYGAHTVSDEVFEKLTAIRGAFRTRIAYVVQKNGGSQPYEVRVADYDGYNQFIVNRSAQPIMSPAWSPDGQRLAYVSFENKKSQLVVQDLNSGARKVVASFQGHNGAPAFSPDGSRLAFASSRDGVLNIYVMGANGGTPTQLTSGAGNNTEPAWSPDGNSILFTSDRSGSPQVYRMDASGGSATAVGGRGSAQISADGKTLVMINGNNNVVKQDLTTGVSEVLSTSFLGESPSLSPNGIMIIYSSTQGLGKVLQLVSADGRFKASLPGSDGQVKFPAWSPYLTK.

The signal sequence occupies residues 1-23 (MKLLKRLVSVFAIVLAVGSNAFA).

It belongs to the TolB family. As to quaternary structure, the Tol-Pal system is composed of five core proteins: the inner membrane proteins TolA, TolQ and TolR, the periplasmic protein TolB and the outer membrane protein Pal. They form a network linking the inner and outer membranes and the peptidoglycan layer.

It localises to the periplasm. In terms of biological role, part of the Tol-Pal system, which plays a role in outer membrane invagination during cell division and is important for maintaining outer membrane integrity. The chain is Tol-Pal system protein TolB from Haemophilus influenzae (strain ATCC 51907 / DSM 11121 / KW20 / Rd).